Reading from the N-terminus, the 261-residue chain is MDMKRRIHLELRNRTPAAVRELVLDNCKSNDGKIEGLTAEFVNLEFLSLINVGLISVSNLPKLPKLKKLELSDNRICGGLDMLAEKLPNLTHLNLSGNKLKDISTLEPLKKLECLKSLDLFNCEVTNLNDYRESVFKLLPQLTYLDGYDREDREAPDSDAEVDGVDEEEDDEEGEDEDKEEDEDGEEEEFDDEEDDDEDEDVEGEEDEDEVSGEEEEFGHDGEVDEDDEDEDEDEDEDEEEEESGKGEKRKRETDDEGEDD.

LRR repeat units lie at residues 16–40 (PAAV…LTAE), 43–64 (NLEF…PKLP), 65–87 (KLKK…AEKL), and 89–110 (NLTH…EPLK). At Lys86 the chain carries N6-acetyllysine. The region spanning 123-161 (CEVTNLNDYRESVFKLLPQLTYLDGYDREDREAPDSDAE) is the LRRCT domain. The interval 149 to 261 (DREDREAPDS…RETDDEGEDD (113 aa)) is disordered. The span at 157–243 (DSDAEVDGVD…DEDEDEEEEE (87 aa)) shows a compositional bias: acidic residues. Position 158 is a phosphoserine (Ser158). A compositionally biased stretch (basic and acidic residues) spans 244–254 (SGKGEKRKRET). Positions 249–252 (KRKR) match the Nuclear localization signal motif. Phosphothreonine is present on Thr254.

This sequence belongs to the ANP32 family. Interacts with histones H3 and H4. Interacts with KLF5; this interaction induces promoter region-specific histone incorporation and inhibition of histone acetylation by ANP32B. Some Glu residues are glycylated by TTLL8; a modification that generates a side chains of glycine on the gamma-carboxyl groups of specific glutamate residues. In terms of processing, directly cleaved by caspase-3/CASP3.

The protein resides in the nucleus. In terms of biological role, multifunctional protein that is involved in the regulation of many processes including cell proliferation, apoptosis, cell cycle progression or transcription. Regulates the proliferation of neuronal stem cells, differentiation of leukemic cells and progression from G1 to S phase of the cell cycle. As negative regulator of caspase-3-dependent apoptosis, may act as an antagonist of ANP32A in regulating tissue homeostasis. Exhibits histone chaperone properties, able to recruit histones to certain promoters, thus regulating the transcription of specific genes. Also plays an essential role in the nucleocytoplasmic transport of specific mRNAs via the uncommon nuclear mRNA export receptor XPO1/CRM1. Participates in the regulation of adequate adaptive immune responses by acting on mRNA expression and cell proliferation. The protein is Acidic leucine-rich nuclear phosphoprotein 32 family member B (ANP32B) of Bos taurus (Bovine).